Here is a 313-residue protein sequence, read N- to C-terminus: Carbamate kinase 2 (313 aa).

This sequence belongs to the carbamate kinase family.

The protein localises to the cytoplasm. The enzyme catalyses hydrogencarbonate + NH4(+) + ATP = carbamoyl phosphate + ADP + H2O + H(+). The protein operates within metabolic intermediate metabolism; carbamoyl phosphate degradation; CO(2) and NH(3) from carbamoyl phosphate: step 1/1. The polypeptide is Carbamate kinase 2 (arcC2) (Staphylococcus aureus (strain bovine RF122 / ET3-1)).